Reading from the N-terminus, the 192-residue chain is GTP cyclohydrolase 1 (192 aa).

Residues C76, H79, and C148 each coordinate Zn(2+).

This sequence belongs to the GTP cyclohydrolase I family. Toroid-shaped homodecamer, composed of two pentamers of five dimers.

It catalyses the reaction GTP + H2O = 7,8-dihydroneopterin 3'-triphosphate + formate + H(+). It functions in the pathway cofactor biosynthesis; 7,8-dihydroneopterin triphosphate biosynthesis; 7,8-dihydroneopterin triphosphate from GTP: step 1/1. This Carboxydothermus hydrogenoformans (strain ATCC BAA-161 / DSM 6008 / Z-2901) protein is GTP cyclohydrolase 1.